Here is an 858-residue protein sequence, read N- to C-terminus: MMEQYYEIKKQYPDAFLFYRVGDFYELFEDDAVKGAQILELTLTHRSNKTKNPIPMAGVPHMAVDTYVNTLVEKGYKVALCEQLEDPKKAKGMVKRGIIQLVTPGTMMNEGPNDAKDSNYLTSVVTTKSGFGLAYSDLSTGEIYSTHLKSFAAVSNELLSLRTREVVYNGPLTEQSKDFMHKANITVSAPTPIEGEHAEISYVEQNLTNGAEKSATRQLVGYLLSTQKRSLAHLQIAKSYEVNQYLQMSHTVQNNLELVASAKTGKKMGSLFWVLDKTHTAMGGRLLKQWLARPLLNVDIINHREKMVQALLDGYFTRENTIDALKGVYDLERLTGRIAFGNVNARELLQLSRSLQAVPVILDALNQSDSDVLTDFAKKIDPLKGVAELISTTLVKDPPLLTTEGGLIRDGVDKQLDRYRDAMNNGKKWLVQMETDERQKTGIENLKVGFNKVFGYYIQVSNGNKSKVPLDRYTRKQTLTNAERYITPELKEHENLILEAQTRSTDLEYDLFVQLRDEVKKYIPALQKLGNQLAALDVYCGFATVAEQNNYCRPSFHTDSQDIDVVNGRHPVVEKVMTAGSYIPNDVKMDSATNIFLITGPNMSGKSTYMRQMALIAIMAQVGSFVPADSAALPIFDQIFTRIGAADDLISGQSTFMVEMSEANAALQYATKRSLVLFDEIGRGTATYDGMALAGAIVKYLHDKVGAKALFATHYHELTSLDETLDYLKNIHVGATEENGKLIFLHKILPGPADQSYGIHVAQLAGLPRAVLREATKLLKRLEAQGSELAPVSQQLDLFAQPEAASDEVDDNNSENSPMTDAEQEVLDDISNLYLADKTPLQIMQMVANWQKDLKDDK.

600-607 is an ATP binding site; the sequence is GPNMSGKS. The tract at residues 803-823 is disordered; it reads EAASDEVDDNNSENSPMTDAE.

This sequence belongs to the DNA mismatch repair MutS family.

In terms of biological role, this protein is involved in the repair of mismatches in DNA. It is possible that it carries out the mismatch recognition step. This protein has a weak ATPase activity. The polypeptide is DNA mismatch repair protein MutS (Lactobacillus helveticus (strain DPC 4571)).